Here is a 313-residue protein sequence, read N- to C-terminus: MRVILAQPRGFCAGVVRAIEIVERALQQNGAPVYVRHEIVHNRHVVENLRNKGARFVEELDEVPHGAVAIFSAHGVAQTVEQDAQARGLDVLDATCPLVTKVHVQGRQYVAAGRRLILIGHAGHPEVEGTIGQIPAEVILVQSEAEVDTLTLPADTPVAYVTQTTLSVDDTRGIIEALQRRFTDIVGPDTRDICYATQNRQAAVRELSEQVDVLLVVGATNSSNSNRLREIGTESGVPSYLVADGSEVRAEWFANARTVGLTAGASAPEEMVEDVIAALRALGPLEVATMSGREEKVEFKLPAKLTQAVAREV.

Cys-12 provides a ligand contact to [4Fe-4S] cluster. (2E)-4-hydroxy-3-methylbut-2-enyl diphosphate contacts are provided by His-41 and His-74. Residues His-41 and His-74 each contribute to the dimethylallyl diphosphate site. Residues His-41 and His-74 each coordinate isopentenyl diphosphate. Position 96 (Cys-96) interacts with [4Fe-4S] cluster. His-124 contacts (2E)-4-hydroxy-3-methylbut-2-enyl diphosphate. His-124 is a binding site for dimethylallyl diphosphate. His-124 is an isopentenyl diphosphate binding site. The Proton donor role is filled by Glu-126. Thr-164 provides a ligand contact to (2E)-4-hydroxy-3-methylbut-2-enyl diphosphate. Cys-194 lines the [4Fe-4S] cluster pocket. Ser-222, Ser-223, Asn-224, and Ser-266 together coordinate (2E)-4-hydroxy-3-methylbut-2-enyl diphosphate. The dimethylallyl diphosphate site is built by Ser-222, Ser-223, Asn-224, and Ser-266. Ser-222, Ser-223, Asn-224, and Ser-266 together coordinate isopentenyl diphosphate.

The protein belongs to the IspH family. The cofactor is [4Fe-4S] cluster.

The catalysed reaction is isopentenyl diphosphate + 2 oxidized [2Fe-2S]-[ferredoxin] + H2O = (2E)-4-hydroxy-3-methylbut-2-enyl diphosphate + 2 reduced [2Fe-2S]-[ferredoxin] + 2 H(+). It carries out the reaction dimethylallyl diphosphate + 2 oxidized [2Fe-2S]-[ferredoxin] + H2O = (2E)-4-hydroxy-3-methylbut-2-enyl diphosphate + 2 reduced [2Fe-2S]-[ferredoxin] + 2 H(+). It participates in isoprenoid biosynthesis; dimethylallyl diphosphate biosynthesis; dimethylallyl diphosphate from (2E)-4-hydroxy-3-methylbutenyl diphosphate: step 1/1. Its pathway is isoprenoid biosynthesis; isopentenyl diphosphate biosynthesis via DXP pathway; isopentenyl diphosphate from 1-deoxy-D-xylulose 5-phosphate: step 6/6. Functionally, catalyzes the conversion of 1-hydroxy-2-methyl-2-(E)-butenyl 4-diphosphate (HMBPP) into a mixture of isopentenyl diphosphate (IPP) and dimethylallyl diphosphate (DMAPP). Acts in the terminal step of the DOXP/MEP pathway for isoprenoid precursor biosynthesis. In Burkholderia pseudomallei (strain 1026b), this protein is 4-hydroxy-3-methylbut-2-enyl diphosphate reductase.